A 153-amino-acid polypeptide reads, in one-letter code: Endoribonuclease YbeY (153 aa).

The Zn(2+) site is built by His114, His118, and His124.

It belongs to the endoribonuclease YbeY family. Zn(2+) serves as cofactor.

It localises to the cytoplasm. In terms of biological role, single strand-specific metallo-endoribonuclease involved in late-stage 70S ribosome quality control and in maturation of the 3' terminus of the 16S rRNA. The sequence is that of Endoribonuclease YbeY from Shewanella oneidensis (strain ATCC 700550 / JCM 31522 / CIP 106686 / LMG 19005 / NCIMB 14063 / MR-1).